A 203-amino-acid polypeptide reads, in one-letter code: A-type ATP synthase subunit E (203 aa).

This sequence belongs to the V-ATPase E subunit family. As to quaternary structure, has multiple subunits with at least A(3), B(3), C, D, E, F, H, I and proteolipid K(x).

The protein localises to the cell membrane. In terms of biological role, component of the A-type ATP synthase that produces ATP from ADP in the presence of a proton gradient across the membrane. The sequence is that of A-type ATP synthase subunit E from Thermococcus kodakarensis (strain ATCC BAA-918 / JCM 12380 / KOD1) (Pyrococcus kodakaraensis (strain KOD1)).